Consider the following 165-residue polypeptide: Large ribosomal subunit protein uL10 (165 aa).

This sequence belongs to the universal ribosomal protein uL10 family. In terms of assembly, part of the ribosomal stalk of the 50S ribosomal subunit. The N-terminus interacts with L11 and the large rRNA to form the base of the stalk. The C-terminus forms an elongated spine to which L12 dimers bind in a sequential fashion forming a multimeric L10(L12)X complex.

In terms of biological role, forms part of the ribosomal stalk, playing a central role in the interaction of the ribosome with GTP-bound translation factors. This Paraburkholderia phymatum (strain DSM 17167 / CIP 108236 / LMG 21445 / STM815) (Burkholderia phymatum) protein is Large ribosomal subunit protein uL10.